The following is a 320-amino-acid chain: tRNA N6-adenosine threonylcarbamoyltransferase (320 aa).

Fe cation-binding residues include H114 and H118. Residues 136-140 (VVSGG), D169, G182, D186, and N273 each bind substrate. D297 lines the Fe cation pocket.

This sequence belongs to the KAE1 / TsaD family. The cofactor is Fe(2+).

The protein resides in the cytoplasm. The catalysed reaction is L-threonylcarbamoyladenylate + adenosine(37) in tRNA = N(6)-L-threonylcarbamoyladenosine(37) in tRNA + AMP + H(+). Required for the formation of a threonylcarbamoyl group on adenosine at position 37 (t(6)A37) in tRNAs that read codons beginning with adenine. Is involved in the transfer of the threonylcarbamoyl moiety of threonylcarbamoyl-AMP (TC-AMP) to the N6 group of A37, together with TsaE and TsaB. TsaD likely plays a direct catalytic role in this reaction. This chain is tRNA N6-adenosine threonylcarbamoyltransferase, found in Ureaplasma parvum serovar 3 (strain ATCC 27815 / 27 / NCTC 11736).